We begin with the raw amino-acid sequence, 341 residues long: Two-component response regulator ORR30 (341 aa).

A Response regulatory domain is found at 12-127 (RVLVIDDDCS…ELSNIWQHIF (116 aa)). Asp63 is modified (4-aspartylphosphate). In terms of domain architecture, HTH myb-type spans 195–254 (DLGKSRLTWTTQLHRQFIAAVNHLGEDKAVPKKILGIMKVKHLTREQVASHLQKYRMQLK). The H-T-H motif DNA-binding region spans 225–250 (PKKILGIMKVKHLTREQVASHLQKYR).

It belongs to the ARR family. Type-B subfamily. In terms of processing, two-component system major event consists of a His-to-Asp phosphorelay between a sensor histidine kinase (HK) and a response regulator (RR). In plants, the His-to-Asp phosphorelay involves an additional intermediate named Histidine-containing phosphotransfer protein (HPt). This multistep phosphorelay consists of a His-Asp-His-Asp sequential transfer of a phosphate group between first a His and an Asp of the HK protein, followed by the transfer to a conserved His of the HPt protein and finally the transfer to an Asp in the receiver domain of the RR protein.

The protein resides in the nucleus. Functionally, transcriptional activator that acts as a floral inducer to promote short-day (SD) flowering pathway. Activates HD3A and other FT-like genes independently from HD1. May also activate MADS-box transcription factors involved in flowering regulation. Functions as a response regulator involved in His-to-Asp phosphorelay signal transduction system. Phosphorylation of the Asp residue in the receiver domain activates the ability of the protein to promote the transcription of target genes. May directly activate some type-A response regulators in response to cytokinins. In Oryza sativa subsp. japonica (Rice), this protein is Two-component response regulator ORR30.